We begin with the raw amino-acid sequence, 72 residues long: Translation initiation factor IF-1 (72 aa).

Positions 1–72 (MAKEESIEIE…TKGRITYRYK (72 aa)) constitute an S1-like domain.

The protein belongs to the IF-1 family. In terms of assembly, component of the 30S ribosomal translation pre-initiation complex which assembles on the 30S ribosome in the order IF-2 and IF-3, IF-1 and N-formylmethionyl-tRNA(fMet); mRNA recruitment can occur at any time during PIC assembly.

It localises to the cytoplasm. In terms of biological role, one of the essential components for the initiation of protein synthesis. Stabilizes the binding of IF-2 and IF-3 on the 30S subunit to which N-formylmethionyl-tRNA(fMet) subsequently binds. Helps modulate mRNA selection, yielding the 30S pre-initiation complex (PIC). Upon addition of the 50S ribosomal subunit IF-1, IF-2 and IF-3 are released leaving the mature 70S translation initiation complex. The sequence is that of Translation initiation factor IF-1 from Chlorobium chlorochromatii (strain CaD3).